A 62-amino-acid chain; its full sequence is MTIIFQLTLFALIAVSFLLVIGVPVVFASPSGWTENKGTVFSGVGIWFLLVFAVGILNSFVI.

Helical transmembrane passes span 8–28 (TLFA…VVFA) and 41–61 (FSGV…NSFV).

It belongs to the PsbZ family. In terms of assembly, PSII is composed of 1 copy each of membrane proteins PsbA, PsbB, PsbC, PsbD, PsbE, PsbF, PsbH, PsbI, PsbJ, PsbK, PsbL, PsbM, PsbT, PsbY, PsbZ, Psb30/Ycf12, at least 3 peripheral proteins of the oxygen-evolving complex and a large number of cofactors. It forms dimeric complexes.

The protein localises to the plastid. It localises to the chloroplast thylakoid membrane. Functionally, may control the interaction of photosystem II (PSII) cores with the light-harvesting antenna, regulates electron flow through the 2 photosystem reaction centers. PSII is a light-driven water plastoquinone oxidoreductase, using light energy to abstract electrons from H(2)O, generating a proton gradient subsequently used for ATP formation. This Oltmannsiellopsis viridis (Marine flagellate) protein is Photosystem II reaction center protein Z.